Reading from the N-terminus, the 381-residue chain is MGAGPVIPTRLATVRRRRPWRGVLLTLAAVAVVASIGTYLTAPRPGGAMAPASTSSTGGHALATLLGNHGVEVVVADSIADVEAAARPDSLLLVAQTQYLVDNALLDRLAKAPGDLLLVAPTSRTRTALTPQLRIAAASPFNSQPNCTLREANRAGSVQWGPSDTYQATGDLVLTSCYGGALVRFRAEGRTITVVGSSNFMTNGGLLPAGNAALAMNLAGNRPRLVWYAPDHIEGEMSSPSSLSDLIPENVHWTIWQLWLVVLLVALWKGRRIGPLVAEELPVVIRASETVEGRGRLYRSRRARDRAADALRTATLQRLRPRLGVGAGAPAPAVVTTIAQRSKADPPFVAYHLFGPAPATDNDLLQLARALDDIERQVTHS.

The next 2 helical transmembrane spans lie at 22–42 (GVLL…YLTA) and 246–266 (LIPE…LLVA).

Its subcellular location is the cell membrane. This is an uncharacterized protein from Mycobacterium tuberculosis (strain ATCC 25618 / H37Rv).